The following is an 867-amino-acid chain: Protein melted homolog (867 aa).

A disordered region spans residues 480–505 (MPSSSRTNVHLSQAASSSRGHSLPQT). Residues 753–860 (EKVLEGQLKE…WLHCLQIAMA (108 aa)) form the PH domain.

The protein belongs to the MELT/VEPH family.

It is found in the cell membrane. This chain is Protein melted homolog, found in Caenorhabditis briggsae.